Reading from the N-terminus, the 248-residue chain is Ribosomal RNA small subunit methyltransferase A (248 aa).

The S-adenosyl-L-methionine site is built by histidine 11, leucine 13, glycine 38, glutamate 60, aspartate 83, and asparagine 101.

It belongs to the class I-like SAM-binding methyltransferase superfamily. rRNA adenine N(6)-methyltransferase family. RsmA subfamily.

It is found in the cytoplasm. It catalyses the reaction adenosine(1518)/adenosine(1519) in 16S rRNA + 4 S-adenosyl-L-methionine = N(6)-dimethyladenosine(1518)/N(6)-dimethyladenosine(1519) in 16S rRNA + 4 S-adenosyl-L-homocysteine + 4 H(+). Specifically dimethylates two adjacent adenosines (A1518 and A1519) in the loop of a conserved hairpin near the 3'-end of 16S rRNA in the 30S particle. May play a critical role in biogenesis of 30S subunits. This chain is Ribosomal RNA small subunit methyltransferase A, found in Aquifex aeolicus (strain VF5).